A 287-amino-acid polypeptide reads, in one-letter code: MLLKGTPVAERVLEKIKQEISHSSTPPGLAVVLIGNDPASEVYVGMKVKKATDLGMVSKAHRLPSDATLTDILKLIERLNNDPTIHGILVQIPLPKHLDSHAIIQAISPEKDVDGLHPVNMGKLLLGQLGGFAPCTPAGIIELLHYYEIPLLGRHVAVVGRSNIVGKPLAAMLMQKHPSTNATVTLLHSQSQNLKEILKTADIIIAAVGVPLFIKESMVSSHAVIIDVGTSRVATNNAKGYILVGDVDFNNVVTKCKAISPVPGGVGPMTVAMLMKNTWESYQKFSS.

NADP(+)-binding positions include 160–162 (GRS), Ser-189, and Thr-230.

It belongs to the tetrahydrofolate dehydrogenase/cyclohydrolase family. Homodimer.

The catalysed reaction is (6R)-5,10-methylene-5,6,7,8-tetrahydrofolate + NADP(+) = (6R)-5,10-methenyltetrahydrofolate + NADPH. The enzyme catalyses (6R)-5,10-methenyltetrahydrofolate + H2O = (6R)-10-formyltetrahydrofolate + H(+). It participates in one-carbon metabolism; tetrahydrofolate interconversion. In terms of biological role, catalyzes the oxidation of 5,10-methylenetetrahydrofolate to 5,10-methenyltetrahydrofolate and then the hydrolysis of 5,10-methenyltetrahydrofolate to 10-formyltetrahydrofolate. The polypeptide is Bifunctional protein FolD (Chlamydia abortus (strain DSM 27085 / S26/3) (Chlamydophila abortus)).